The following is a 136-amino-acid chain: uncharacterized protein (136 aa).

The disordered stretch occupies residues 1 to 51 (MAANATSGRPPSIALRQPEATGWRRGIPAKVATKGTQAEREGDVRSGGRAR). Positions 37–46 (QAEREGDVRS) are enriched in basic and acidic residues.

This is an uncharacterized protein from Homo sapiens (Human).